A 709-amino-acid chain; its full sequence is ATP-dependent zinc metalloprotease YME1 homolog (709 aa).

Residues 152–182 form a disordered region; that stretch reads FTSDTSSTVSSTPSLNHSLQNSMPPSTPTPP. Over residues 153–165 the composition is skewed to low complexity; the sequence is TSDTSSTVSSTPS. A helical transmembrane segment spans residues 217 to 239; the sequence is IFKFIAGLSVASYFVLLGMSIFA. An ATP-binding site is contributed by 307 to 314; it reads GPPGTGKT. Residue His-530 coordinates Zn(2+). Glu-531 is an active-site residue. 2 residues coordinate Zn(2+): His-534 and Asp-608.

It in the N-terminal section; belongs to the AAA ATPase family. In the C-terminal section; belongs to the peptidase M41 family. Requires Zn(2+) as cofactor.

The protein localises to the mitochondrion membrane. Its function is as follows. Putative ATP-dependent protease. This is ATP-dependent zinc metalloprotease YME1 homolog from Schizosaccharomyces pombe (strain 972 / ATCC 24843) (Fission yeast).